The chain runs to 211 residues: Ribosome maturation factor RimM (211 aa).

Residues P111 to L182 form the PRC barrel domain. Residues E184–R211 form a disordered region.

It belongs to the RimM family. Binds ribosomal protein uS19.

It localises to the cytoplasm. Functionally, an accessory protein needed during the final step in the assembly of 30S ribosomal subunit, possibly for assembly of the head region. Essential for efficient processing of 16S rRNA. May be needed both before and after RbfA during the maturation of 16S rRNA. It has affinity for free ribosomal 30S subunits but not for 70S ribosomes. The polypeptide is Ribosome maturation factor RimM (Clavibacter sepedonicus (Clavibacter michiganensis subsp. sepedonicus)).